The following is a 302-amino-acid chain: UPF0761 membrane protein Tola_0461 (302 aa).

Helical transmembrane passes span 51–71, 111–131, 150–170, 188–208, 222–242, and 256–276; these read YVSL…LSWL, TTSI…AAID, ITMY…SLLL, LGGG…ILLL, ALLG…GFGY, and ALAG…VVLL.

Belongs to the UPF0761 family.

It is found in the cell inner membrane. This is UPF0761 membrane protein Tola_0461 from Tolumonas auensis (strain DSM 9187 / NBRC 110442 / TA 4).